We begin with the raw amino-acid sequence, 188 residues long: PRA1 family protein 3 (188 aa).

Met-1 carries the post-translational modification N-acetylmethionine. Residues 1–35 are Cytoplasmic-facing; it reads MDVNIAPLRAWDDFFPGSDRFARPDFRDISKWNNR. 2 helical membrane passes run 36-56 and 57-77; these read VVSN…MMIS and IVGF…VLVF. Residues 78-93 lie on the Cytoplasmic side of the membrane; that stretch reads TGFVWAAHNKDVLRRM. Helical transmembrane passes span 94 to 114 and 115 to 135; these read KKRY…FLIS and MFGG…LMFI. Residues 103-117 are required for homodimer formation and heterodimer formation with ARL6IP1; that stretch reads MVVMLASYFLISMFG. The Cytoplasmic segment spans residues 136-188; that stretch reads HASLRLRNLKNKLENKMEGIGLKRTPMGIVLDALEQQEEGINRLTDYISKVKE. The targeting to endoplasmic reticulum membrane stretch occupies residues 136–188; sequence HASLRLRNLKNKLENKMEGIGLKRTPMGIVLDALEQQEEGINRLTDYISKVKE.

It belongs to the PRA1 family. As to quaternary structure, homodimer. Heterodimer with ARL6IP1. Forms multimers. Interacts with ARL6. Interacts with prenylated RAB1A and RAB3A. Interacts with SLC1A1/EAAC1. Interacts with RTN2 (via first transmembrane domain). Does not interact with VAMP1, VAMP2 or VAMP3.

It localises to the endoplasmic reticulum membrane. It is found in the cell membrane. The protein resides in the cytoplasm. Its subcellular location is the cytoskeleton. In terms of biological role, regulates intracellular concentrations of taurine and glutamate. Negatively modulates SLC1A1/EAAC1 glutamate transport activity by decreasing its affinity for glutamate in a PKC activity-dependent manner. Plays a role in the retention of SLC1A1/EAAC1 in the endoplasmic reticulum. This is PRA1 family protein 3 (ARL6IP5) from Homo sapiens (Human).